Consider the following 247-residue polypeptide: tRNA (guanine-N(1)-)-methyltransferase (247 aa).

S-adenosyl-L-methionine contacts are provided by residues Gly-116 and 135–140; that span reads IGDYVL.

This sequence belongs to the RNA methyltransferase TrmD family. As to quaternary structure, homodimer.

It is found in the cytoplasm. The enzyme catalyses guanosine(37) in tRNA + S-adenosyl-L-methionine = N(1)-methylguanosine(37) in tRNA + S-adenosyl-L-homocysteine + H(+). Specifically methylates guanosine-37 in various tRNAs. The sequence is that of tRNA (guanine-N(1)-)-methyltransferase from Symbiobacterium thermophilum (strain DSM 24528 / JCM 14929 / IAM 14863 / T).